The primary structure comprises 404 residues: E3 ubiquitin-protein ligase RNF128 (404 aa).

The signal sequence occupies residues 1-31; that stretch reads MGALKMRCQCFPLPYLSLLALLLLNLSLTRA. The PA domain occupies 62-166; that stretch reads DSPIERAAGL…LKGNEIVDLI (105 aa). A helical transmembrane segment spans residues 191-211; the sequence is IFFVSVSFFIVTAATVGYFIF. The RING-type; atypical zinc-finger motif lies at 260–301; sequence CAVCIEPYKPSDVVRILTCNHFFHKNCIDPWLLEHRTCPMCK. The tract at residues 336-356 is disordered; the sequence is ITEEENHSETASSGYASVRGG.

In terms of processing, auto-ubiquitinated. Expressed in the cement gland, cranial placodes, and the pronephros.

Its subcellular location is the endomembrane system. It localises to the cytoplasm. The protein resides in the perinuclear region. The enzyme catalyses S-ubiquitinyl-[E2 ubiquitin-conjugating enzyme]-L-cysteine + [acceptor protein]-L-lysine = [E2 ubiquitin-conjugating enzyme]-L-cysteine + N(6)-ubiquitinyl-[acceptor protein]-L-lysine.. Its pathway is protein modification; protein ubiquitination. In terms of biological role, E3 ubiquitin-protein ligase that catalyzes polyubiquitin chains. Converts epidermis into cement gland and neural tissue in whole embryos. This is E3 ubiquitin-protein ligase RNF128 (rnf128) from Xenopus laevis (African clawed frog).